Reading from the N-terminus, the 198-residue chain is V-type ATP synthase subunit E (198 aa).

This sequence belongs to the V-ATPase E subunit family.

Its function is as follows. Produces ATP from ADP in the presence of a proton gradient across the membrane. This is V-type ATP synthase subunit E from Clostridium perfringens (strain ATCC 13124 / DSM 756 / JCM 1290 / NCIMB 6125 / NCTC 8237 / Type A).